The chain runs to 414 residues: Isocitrate dehydrogenase [NADP] cytoplasmic (414 aa).

The residue at position 2 (Ser2) is an N-acetylserine. Tyr42 is modified (phosphotyrosine). 75–77 is a binding site for NADP(+); it reads TIT. Thr77 provides a ligand contact to substrate. Lys81 bears the N6-acetyllysine mark. Arg82 is a binding site for NADP(+). Residues 94-100 and Arg109 contribute to the substrate site; that span reads SPNGTIR. Lys126 carries the post-translational modification N6-succinyllysine. Substrate-binding residues include Arg132 and Lys212. Lys224, Lys233, and Lys243 each carry N6-acetyllysine. Asp252 serves as a coordination point for Mn(2+). Lys260 contributes to the NADP(+) binding site. Asp275 and Asp279 together coordinate Mn(2+). Residue 310-315 coordinates NADP(+); the sequence is GTVTRH. N6-acetyllysine is present on Lys321. Asn328 contributes to the NADP(+) binding site. Position 389 is a phosphoserine (Ser389). Lys400 carries the post-translational modification N6-succinyllysine.

The protein belongs to the isocitrate and isopropylmalate dehydrogenases family. In terms of assembly, homodimer. It depends on Mg(2+) as a cofactor. Mn(2+) serves as cofactor. In terms of processing, acetylation at Lys-374 dramatically reduces catalytic activity.

Its subcellular location is the cytoplasm. It is found in the cytosol. It catalyses the reaction D-threo-isocitrate + NADP(+) = 2-oxoglutarate + CO2 + NADPH. Functionally, catalyzes the NADP(+)-dependent oxidative decarboxylation of isocitrate (D-threo-isocitrate) to 2-ketoglutarate (2-oxoglutarate), which is required by other enzymes such as the phytanoyl-CoA dioxygenase. Plays a critical role in the generation of NADPH, an important cofactor in many biosynthesis pathways. May act as a corneal epithelial crystallin and may be involved in maintaining corneal epithelial transparency. In Microtus ochrogaster (Prairie vole), this protein is Isocitrate dehydrogenase [NADP] cytoplasmic (IDH1).